Consider the following 504-residue polypeptide: MSFSVDVLANIAIELQRGIGHQDRFQRLITTLRQVLECDASALLRYDLRQFIPLAIDGLAKDVLGRRFALEGHPRLEAIARAGDVVRFPADSGLPDPYDGLIPGQESLKVHACVGLPLFAGQNLIGALTLDGMQPDQFDVFSDEELRLIAALAAGALSNALLIEQLESQNMLPGDAAPFEAVKQTQMIGLSPGMTQLKKEIEIVAASDLNVLISGETGTGKELVAKAIHEASPRAVNPLVYLNCAALPESVAESELFGHVKGAFTGAISNRSGKFEMADNGTLFLDEIGELSLALQAKLLRVLQYGDIQRVGDDRSLRVDVRVLAATNRDLREEVLAGRFRADLFHRLSVFPLSVPPLRERGDDVILLAGYFCEQCRLRQGLSRVVLSAGARNLLQHYSFPGNVRELEHAIHRAVVLARATRNGDEVILEAQHFAFPEVTLPPPEAAAVPVVKQNLREATEAFQRETIRQALAQNHHNWAACARMLETDVANLHRLAKRLGLKD.

Position 57 is a 4-aspartylphosphate (Asp57). A Sigma-54 factor interaction domain is found at 187–416; it reads MIGLSPGMTQ…LEHAIHRAVV (230 aa). ATP-binding positions include 215–222 and 278–287; these read GETGTGKE and ADNGTLFLDE. Residues 479–498 constitute a DNA-binding region (H-T-H motif); it reads WAACARMLETDVANLHRLAK.

The protein operates within nitrogen metabolism; nitric oxide reduction. Functionally, required for the expression of anaerobic nitric oxide (NO) reductase, acts as a transcriptional activator for at least the norVW operon. Activation also requires sigma-54. The sequence is that of Anaerobic nitric oxide reductase transcription regulator NorR from Shigella dysenteriae serotype 1 (strain Sd197).